Here is a 507-residue protein sequence, read N- to C-terminus: Subtilisin-like protease 1 (507 aa).

An N-terminal signal peptide occupies residues 1–19 (MGVFRFISISLAAVSAANA). Residues 20-116 (AQILSMPHAQ…VEPDTIISVN (97 aa)) constitute a propeptide that is removed on maturation. The 80-residue stretch at 34–113 (SYIVMMKDDT…VMFVEPDTII (80 aa)) folds into the Inhibitor I9 domain. A Peptidase S8 domain is found at 126 to 400 (SWGLARISNS…NVLISNGGAK (275 aa)). Catalysis depends on charge relay system residues Asp-158 and His-190. Residues 175 to 198 (GSNQVNDGDDRDGSGHGTHTSGTM) form a disordered region. Asn-251 is a glycosylation site (N-linked (GlcNAc...) asparagine). Over residues 282–294 (NENQDARSSSPAS) the composition is skewed to polar residues. The interval 282 to 312 (NENQDARSSSPASEPSVCTVGSSAEDDSRSS) is disordered. The active-site Charge relay system is the Ser-345. A compositionally biased stretch (polar residues) spans 378 to 394 (SSSITDVGPGTPTNVLI). A disordered region spans residues 378–486 (SSSITDVGPG…YPGGDNFDFD (109 aa)). Pro residues-rich tracts occupy residues 405–428 (KPAPGPSPNPSQPSEPQQPAPSQP) and 438–449 (EPFPGEPFPGEP). Positions 450–461 (FPGESSPGESAP) are enriched in low complexity. Pro residues predominate over residues 462 to 476 (APAPMPPSPQHPHTP).

It belongs to the peptidase S8 family.

The protein localises to the secreted. In terms of biological role, secreted subtilisin-like serine protease with keratinolytic activity that contributes to pathogenicity. This Trichophyton tonsurans (Scalp ringworm fungus) protein is Subtilisin-like protease 1 (SUB1).